The sequence spans 158 residues: MVEINNQRKAFLDMLAWSEGTDNGRQKTRNHGYDVIVGGELFTDYSDHPRKLVTLNPKLKSTGAGRYQLLSRWWDAYRKQLGLKDFSPKSQDAVALQQIKERGALPMIDRGDIRQAIDRCSNIWASLPGAGYGQFEHKADSLIAKFKEAGGTVREIDV.

Glutamate 19 is a catalytic residue.

Belongs to the glycosyl hydrolase 24 family. Monomer.

The protein localises to the host cytoplasm. It catalyses the reaction Endolytic cleavage of the (1-&gt;4)-beta-glycosidic linkage between N-acetylmuramic acid (MurNAc) and N-acetylglucosamine (GlcNAc) residues in peptidoglycan with concomitant formation of a 1,6-anhydrobond in the MurNAc residue.. With respect to regulation, inactivated by zinc. In terms of biological role, endolysin with transglycosylase activity that degrades host peptidoglycans and participates with the holin and spanin proteins in the sequential events which lead to the programmed host cell lysis releasing the mature viral particles. Once the holin has permeabilized the host cell membrane, the endolysin can reach the periplasm and break down the peptidoglycan layer. The protein is Endolysin (R) of Escherichia coli (Bacteriophage lambda).